A 253-amino-acid chain; its full sequence is Ice-binding protein (253 aa).

An N-terminal signal peptide occupies residues 1–27; it reads MKTLISNSKKVLIPLIMGSIFAGNVMA. A disulfide bond links cysteine 75 and cysteine 93. 2 short sequence motifs (ice-binding site motif (T-A/G-X-T/N)) span residues 220-223 and 232-235; these read TGTT and TAVT.

It belongs to the ice-binding protein family.

It localises to the secreted. Its function is as follows. Binds to the surface of ice crystals and inhibits their growth. Has ice recrystallization inhibition (RI) activity (the ability to prevent the formation of larger grains of ice at the expense of smaller grains), which may protect membranes from freezing injury. Has high thermal hysteresis (TH) activity, which is the ability to lower the freezing point of an aqueous solution below its melting point, and thus the freezing of the cell fluid can be prevented protecting the organism from ice damage. The TH activity of this protein is 3.8 degrees Celsius at 14 mM. In Colwellia sp, this protein is Ice-binding protein.